The sequence spans 337 residues: 1-aminocyclopropane-1-carboxylate deaminase (337 aa).

An N6-(pyridoxal phosphate)lysine modification is found at Lys50. The active-site Nucleophile is Ser77.

Belongs to the ACC deaminase/D-cysteine desulfhydrase family. Homotrimer. It depends on pyridoxal 5'-phosphate as a cofactor.

It catalyses the reaction 1-aminocyclopropane-1-carboxylate + H2O = 2-oxobutanoate + NH4(+). Its function is as follows. Catalyzes a cyclopropane ring-opening reaction, the irreversible conversion of 1-aminocyclopropane-1-carboxylate (ACC) to ammonia and alpha-ketobutyrate. Allows growth on ACC as a nitrogen source. In Rhizobium rhizogenes (strain K84 / ATCC BAA-868) (Agrobacterium radiobacter), this protein is 1-aminocyclopropane-1-carboxylate deaminase.